The primary structure comprises 157 residues: Endoribonuclease YbeY (157 aa).

His114, His118, and His124 together coordinate Zn(2+).

The protein belongs to the endoribonuclease YbeY family. Zn(2+) is required as a cofactor.

It localises to the cytoplasm. In terms of biological role, single strand-specific metallo-endoribonuclease involved in late-stage 70S ribosome quality control and in maturation of the 3' terminus of the 16S rRNA. In Yersinia pestis, this protein is Endoribonuclease YbeY.